A 245-amino-acid polypeptide reads, in one-letter code: Probable phosphatase CKO_02035 (245 aa).

9 residues coordinate Zn(2+): H7, H9, H15, H40, E73, H101, H131, D192, and H194.

Belongs to the PHP family. In terms of assembly, homotrimer. Requires Zn(2+) as cofactor.

This is Probable phosphatase CKO_02035 from Citrobacter koseri (strain ATCC BAA-895 / CDC 4225-83 / SGSC4696).